We begin with the raw amino-acid sequence, 642 residues long: MTDMPKTPLLDLVHRPADMKGLSDRQLVQLADELRSETVSAVSVTGGHLGAGLGVVELTVALHAVFDTPRDKIIWDVGHQCYPHKILTERRDRIRTLRMKGGLSGFTKRSESPYDPFGAAHSSTSISAALGFAVARDLGGVVPEGLGDAIAVIGDGSMSAGMAYEAMNNAGHLKKRMIVILNDNEMSIAPPTGAMSSYLSRLYSGEPFQDFKAAAKGAVSLLPEPFREGAKRAKDMLKGMAVGGTLFEELGFSYIGPIDGHDLDQLLPLLRTVKARATGPIMIHALTKKGKGYAPAETARDKGHATAKFDVLTGQQTKAPSNAPSYTKVFAQSLLEEATKDDKICAVTAAMPDGTGLNLFAERFPSRCFDVGIAEQHGVTFSAALAAGGMKPFCAMYSTFLQRGYDQVVHDVAIQRLPVRFAIDRAGLVGADGATHAGSFDIAYLANLPGFVVMAAADEAELKHMVATAVAHDDGPIAFRFPRGEGNGVDMPEVGEVLEIGKGRIITEGTRVAILSFGTRLAEVQKAGEALAARGITPTIADARFAKPLDREMILDLVANHEALITVEEGAIGGFGSHVAQLLSDEGVFDTGFKYRSMVLPDIFIDQSSPADMYAVAGMNAADIETKVLSVLGIAQIGEARA.

Residues His-79 and 120–122 each bind thiamine diphosphate; that span reads AHS. Residue Asp-155 participates in Mg(2+) binding. Thiamine diphosphate contacts are provided by residues 156–157, Asn-184, Tyr-293, and Glu-375; that span reads GS. Asn-184 lines the Mg(2+) pocket.

It belongs to the transketolase family. DXPS subfamily. Homodimer. Requires Mg(2+) as cofactor. Thiamine diphosphate serves as cofactor.

It catalyses the reaction D-glyceraldehyde 3-phosphate + pyruvate + H(+) = 1-deoxy-D-xylulose 5-phosphate + CO2. It functions in the pathway metabolic intermediate biosynthesis; 1-deoxy-D-xylulose 5-phosphate biosynthesis; 1-deoxy-D-xylulose 5-phosphate from D-glyceraldehyde 3-phosphate and pyruvate: step 1/1. Catalyzes the acyloin condensation reaction between C atoms 2 and 3 of pyruvate and glyceraldehyde 3-phosphate to yield 1-deoxy-D-xylulose-5-phosphate (DXP). The polypeptide is 1-deoxy-D-xylulose-5-phosphate synthase 2 (Roseobacter denitrificans (strain ATCC 33942 / OCh 114) (Erythrobacter sp. (strain OCh 114))).